Reading from the N-terminus, the 281-residue chain is Cell growth regulator with EF hand domain protein 1 (281 aa).

An N-terminal signal peptide occupies residues 1–21; that stretch reads MFQWLMQALMLPLLLLPLGRA. 2 consecutive EF-hand domains span residues 71–106 and 115–150; these read DREQ…ALAP and PVIL…PKHT. The Ca(2+) site is built by Asp-84, Asp-86, Asn-88, Gln-90, Glu-95, Asp-128, Asp-130, Asp-132, and Glu-139. Positions 148–281 are disordered; sequence KHTESLPPAL…HSIQLENDEI (134 aa). Positions 168–183 are enriched in polar residues; sequence LLANSPLQSETQQSLG. Residues 184–213 show a composition bias toward basic and acidic residues; sequence TKEEIRGQVEAKRASLEPEQEAGHQTEGKV. A phosphoserine mark is found at Ser-217 and Ser-228. The span at 237–256 shows a compositional bias: basic and acidic residues; sequence EGAEEQVEIKDNEGEAKELL.

Probably digested extracellularly by an unknown serine protease generating extremely hydrophobic bioactive peptides.

The protein resides in the secreted. Mediates cell-cell adhesion in a calcium-dependent manner. Able to inhibit growth in several cell lines. The protein is Cell growth regulator with EF hand domain protein 1 of Mus musculus (Mouse).